A 290-amino-acid chain; its full sequence is ATP synthase gamma chain (290 aa).

It belongs to the ATPase gamma chain family. In terms of assembly, F-type ATPases have 2 components, CF(1) - the catalytic core - and CF(0) - the membrane proton channel. CF(1) has five subunits: alpha(3), beta(3), gamma(1), delta(1), epsilon(1). CF(0) has three main subunits: a, b and c.

The protein resides in the cell inner membrane. Its function is as follows. Produces ATP from ADP in the presence of a proton gradient across the membrane. The gamma chain is believed to be important in regulating ATPase activity and the flow of protons through the CF(0) complex. The chain is ATP synthase gamma chain from Bacteroides fragilis (strain ATCC 25285 / DSM 2151 / CCUG 4856 / JCM 11019 / LMG 10263 / NCTC 9343 / Onslow / VPI 2553 / EN-2).